Here is a 309-residue protein sequence, read N- to C-terminus: GTPase Era (309 aa).

One can recognise an Era-type G domain in the interval 16 to 186 (HAGFVAIVGK…REQILDALPE (171 aa)). The G1 stretch occupies residues 24–31 (GKPNVGKS). 24-31 (GKPNVGKS) serves as a coordination point for GTP. A G2 region spans residues 50–54 (QTTRR). The segment at 71–74 (DTPG) is G3. Residues 71–75 (DTPGL) and 133–136 (NKVD) each bind GTP. The segment at 133-136 (NKVD) is G4. The tract at residues 164 to 166 (LSA) is G5. The KH type-2 domain occupies 217 to 294 (LREELPYAVA…FLGLEVIVIP (78 aa)).

This sequence belongs to the TRAFAC class TrmE-Era-EngA-EngB-Septin-like GTPase superfamily. Era GTPase family. As to quaternary structure, monomer.

It localises to the cytoplasm. The protein resides in the cell membrane. Functionally, an essential GTPase that binds both GDP and GTP, with rapid nucleotide exchange. Plays a role in 16S rRNA processing and 30S ribosomal subunit biogenesis and possibly also in cell cycle regulation and energy metabolism. The sequence is that of GTPase Era from Deinococcus geothermalis (strain DSM 11300 / CIP 105573 / AG-3a).